Consider the following 847-residue polypeptide: UPF0182 protein CYB_0372 (847 aa).

7 consecutive transmembrane segments (helical) span residues 7-27, 51-71, 76-96, 141-161, 168-188, 220-240, and 259-279; these read GLFLLLGVGLGILAITGLAAF, WGLGLGAFLFALAVTGSNICS, ATLAGAWAIATGLSVFFAGSL, FNLVLLTLIAVVLIYLVELGL, LALSLYAQRHLLILGGSLFLI, LPATTLMSGVAGLTAVGFWAL, and WASSLLAPAILWGAYLGFGLL.

It belongs to the UPF0182 family.

It localises to the cell membrane. The chain is UPF0182 protein CYB_0372 from Synechococcus sp. (strain JA-2-3B'a(2-13)) (Cyanobacteria bacterium Yellowstone B-Prime).